We begin with the raw amino-acid sequence, 403 residues long: Phosphoglycerate kinase (403 aa).

Residues 21–23, arginine 36, 59–62, arginine 119, and arginine 159 contribute to the substrate site; these read DFN and HLGR. Residues lysine 214, glycine 301, glutamate 332, and 359–362 each bind ATP; that span reads GGDS.

It belongs to the phosphoglycerate kinase family. In terms of assembly, monomer.

The protein resides in the cytoplasm. It carries out the reaction (2R)-3-phosphoglycerate + ATP = (2R)-3-phospho-glyceroyl phosphate + ADP. The protein operates within carbohydrate degradation; glycolysis; pyruvate from D-glyceraldehyde 3-phosphate: step 2/5. This chain is Phosphoglycerate kinase, found in Lactobacillus delbrueckii subsp. bulgaricus (strain ATCC 11842 / DSM 20081 / BCRC 10696 / JCM 1002 / NBRC 13953 / NCIMB 11778 / NCTC 12712 / WDCM 00102 / Lb 14).